Reading from the N-terminus, the 330-residue chain is Anthranilate phosphoribosyltransferase (330 aa).

Residues Gly79, 82–83 (GD), Thr87, 89–92 (NIST), 107–115 (KHGNYGVSS), and Ser119 contribute to the 5-phospho-alpha-D-ribose 1-diphosphate site. Gly79 provides a ligand contact to anthranilate. Ser91 contacts Mg(2+). Asn110 lines the anthranilate pocket. Residue Arg165 coordinates anthranilate. 2 residues coordinate Mg(2+): Asp223 and Glu224.

The protein belongs to the anthranilate phosphoribosyltransferase family. Homodimer. The cofactor is Mg(2+).

The catalysed reaction is N-(5-phospho-beta-D-ribosyl)anthranilate + diphosphate = 5-phospho-alpha-D-ribose 1-diphosphate + anthranilate. It functions in the pathway amino-acid biosynthesis; L-tryptophan biosynthesis; L-tryptophan from chorismate: step 2/5. In terms of biological role, catalyzes the transfer of the phosphoribosyl group of 5-phosphorylribose-1-pyrophosphate (PRPP) to anthranilate to yield N-(5'-phosphoribosyl)-anthranilate (PRA). This chain is Anthranilate phosphoribosyltransferase, found in Flavobacterium johnsoniae (strain ATCC 17061 / DSM 2064 / JCM 8514 / BCRC 14874 / CCUG 350202 / NBRC 14942 / NCIMB 11054 / UW101) (Cytophaga johnsonae).